The chain runs to 443 residues: Glutamate--tRNA ligase 2 (443 aa).

The short motif at Pro-7 to Asn-17 is the 'HIGH' region element. Residues Lys-240–Arg-244 carry the 'KMSKS' region motif. Lys-243 lines the ATP pocket.

It belongs to the class-I aminoacyl-tRNA synthetase family. Glutamate--tRNA ligase type 1 subfamily. Monomer.

The protein resides in the cytoplasm. The catalysed reaction is tRNA(Glu) + L-glutamate + ATP = L-glutamyl-tRNA(Glu) + AMP + diphosphate. In terms of biological role, catalyzes the attachment of glutamate to tRNA(Glu) in a two-step reaction: glutamate is first activated by ATP to form Glu-AMP and then transferred to the acceptor end of tRNA(Glu). In Gluconacetobacter diazotrophicus (strain ATCC 49037 / DSM 5601 / CCUG 37298 / CIP 103539 / LMG 7603 / PAl5), this protein is Glutamate--tRNA ligase 2.